Here is a 426-residue protein sequence, read N- to C-terminus: Enolase (426 aa).

The disordered stretch occupies residues 38-60 (PSGASTGAHEAVEKRDGDKSRYG). The span at 47 to 58 (EAVEKRDGDKSR) shows a compositional bias: basic and acidic residues. Position 163 (Q163) interacts with (2R)-2-phosphoglycerate. E205 acts as the Proton donor in catalysis. Mg(2+) contacts are provided by D242, E285, and D312. Residues K337, R366, S367, and K388 each contribute to the (2R)-2-phosphoglycerate site. The active-site Proton acceptor is the K337.

Belongs to the enolase family. Requires Mg(2+) as cofactor.

It localises to the cytoplasm. The protein localises to the secreted. Its subcellular location is the cell surface. The enzyme catalyses (2R)-2-phosphoglycerate = phosphoenolpyruvate + H2O. It participates in carbohydrate degradation; glycolysis; pyruvate from D-glyceraldehyde 3-phosphate: step 4/5. Functionally, catalyzes the reversible conversion of 2-phosphoglycerate (2-PG) into phosphoenolpyruvate (PEP). It is essential for the degradation of carbohydrates via glycolysis. The polypeptide is Enolase (Caulobacter sp. (strain K31)).